The chain runs to 244 residues: Mitophagy receptor atg43 (244 aa).

Residues 1–24 (MSSESKGIPIPRSDSNKTSDVSSW) are disordered. Residues 1 to 198 (MSSESKGIPI…LVALITLRDH (198 aa)) are Cytoplasmic-facing. The atg8 interacting motif (AIM) signature appears at 28–31 (YELI). The segment at 105–131 (SLSLLQSKEEDDSSNWETEDSESAVEE) is disordered. Acidic residues predominate over residues 113–131 (EEDDSSNWETEDSESAVEE). Residues 165 to 184 (PPIPDLRFQQSYLQSIQRAN) are involved in MIM complex binding. Required for normal vegetative cell population growth but is dispensable for mitophagy. The helical transmembrane segment at 199-215 (VLYPFLSGGMWVFVRHI) threads the bilayer. At 216–244 (FQFLKLQEKGFHFGQSLRRNLGLFSTFKD) the chain is on the mitochondrial intermembrane side.

In terms of assembly, interacts (via N-terminal atg8 interacting motif) with atg8; the interaction is direct. Interacts with the mitochondrial outer import machinery (MIM) complex subunits mim1 and mim2.

The protein resides in the mitochondrion outer membrane. In terms of biological role, mitophagy receptor that tethers atg8 to the mitochondrial outer membrane to promote selective autophagy. This chain is Mitophagy receptor atg43, found in Schizosaccharomyces pombe (strain 972 / ATCC 24843) (Fission yeast).